The following is a 437-amino-acid chain: Argininosuccinate lyase (437 aa).

This sequence belongs to the lyase 1 family. Argininosuccinate lyase subfamily.

The protein resides in the cytoplasm. It catalyses the reaction 2-(N(omega)-L-arginino)succinate = fumarate + L-arginine. Its pathway is amino-acid biosynthesis; L-arginine biosynthesis; L-arginine from L-ornithine and carbamoyl phosphate: step 3/3. In Clostridium acetobutylicum (strain ATCC 824 / DSM 792 / JCM 1419 / IAM 19013 / LMG 5710 / NBRC 13948 / NRRL B-527 / VKM B-1787 / 2291 / W), this protein is Argininosuccinate lyase.